The following is a 1088-amino-acid chain: RNA-directed RNA polymerase (1088 aa).

Residues 501-687 (LSYGDVTRFL…AKRYIAGGKI (187 aa)) enclose the RdRp catalytic domain.

It belongs to the reoviridae RNA-directed RNA polymerase family. In terms of assembly, interacts with VP3 (Potential). Interacts with VP2; this interaction activates VP1. Interacts with NSP5; this interaction is probably necessary for the formation of functional virus factories. Interacts with NSP2; this interaction is weak. The cofactor is Mg(2+).

It is found in the virion. It catalyses the reaction RNA(n) + a ribonucleoside 5'-triphosphate = RNA(n+1) + diphosphate. In terms of biological role, RNA-directed RNA polymerase that is involved in both transcription and genome replication. Together with VP3 capping enzyme, forms an enzyme complex positioned near the channels situated at each of the five-fold vertices of the core. Following infection, the outermost layer of the virus is lost, leaving a double-layered particle (DLP) made up of the core and VP6 shell. VP1 then catalyzes the transcription of fully conservative plus-strand genomic RNAs that are extruded through the DLP's channels into the cytoplasm where they function as mRNAs for translation of viral proteins. One copy of each of the viral (+)RNAs is also recruited during core assembly, together with newly synthesized polymerase complexes and VP2. The polymerase of these novo-formed particles catalyzes the synthesis of complementary minus-strands leading to dsRNA formation. To do so, the polymerase specifically recognizes and binds 4 bases 5'-UGUG-3' in the conserved 3'-sequence of plus-strand RNA templates. VP2 presumably activates the autoinhibited VP1-RNA complex to coordinate packaging and genome replication. Once dsRNA synthesis is complete, the polymerase switches to the transcriptional mode, thus providing secondary transcription. The sequence is that of RNA-directed RNA polymerase from Rotavirus A (strain RVA/Human/Philippines/L26/1987/G12P1B[4]) (RV-A).